Consider the following 165-residue polypeptide: Large ribosomal subunit protein bL17 (165 aa).

Residues 138-158 (QEKREAQEKAREEKRTARKSD) show a composition bias toward basic and acidic residues. A disordered region spans residues 138-165 (QEKREAQEKAREEKRTARKSDSVPARKK).

This sequence belongs to the bacterial ribosomal protein bL17 family. In terms of assembly, part of the 50S ribosomal subunit. Contacts protein L32.

The polypeptide is Large ribosomal subunit protein bL17 (Leptospira borgpetersenii serovar Hardjo-bovis (strain JB197)).